A 292-amino-acid chain; its full sequence is 33 kDa chaperonin (292 aa).

Disulfide bonds link C230–C232 and C263–C266.

This sequence belongs to the HSP33 family. Post-translationally, under oxidizing conditions two disulfide bonds are formed involving the reactive cysteines. Under reducing conditions zinc is bound to the reactive cysteines and the protein is inactive.

Its subcellular location is the cytoplasm. Functionally, redox regulated molecular chaperone. Protects both thermally unfolding and oxidatively damaged proteins from irreversible aggregation. Plays an important role in the bacterial defense system toward oxidative stress. In Sodalis glossinidius (strain morsitans), this protein is 33 kDa chaperonin.